Here is a 320-residue protein sequence, read N- to C-terminus: MAFPKKKLQGLVAATITPMTENGEINFSVIGQYVDYLVKEQGVKNIFVNGTTGEGLSLSVSERRQVAEEWVTKGKDKLDQVIIHVGALSLKESQELAQHAAEIGADGIAVIAPFFLKPWTKDILINFLKEVAAAAPALPFYYYHIPALTGVKIRAEELLDGILDKIPTFQGLKFSDTDLLDFGQCVDQNRQQQFAFLFGVDEQLLSALVMGATGAVGSTYNYLGKKTNQMLEAFEQKDFSLALNYQFCIQRFINFVVKLGFGVSQTKAIMTLVSGIPMGPPRLPLQKASREFTDSAEAKLKSLDFLSFTDLKDGNLEAGS.

Residues T51 and T52 each contribute to the aceneuramate site. The active-site Proton donor is the Y143. K173 functions as the Schiff-base intermediate with substrate in the catalytic mechanism. Aceneuramate contacts are provided by S175, G199, D201, E202, and S218.

This sequence belongs to the DapA family. NanA subfamily. As to quaternary structure, homotetramer. As to expression, isoform 2 is expressed in placenta, liver, kidney, pancreas, spleen, thymus, ovary, small intestine and peripheral blood leukocyte.

It is found in the cytoplasm. The enzyme catalyses aceneuramate = aldehydo-N-acetyl-D-mannosamine + pyruvate. Its pathway is amino-sugar metabolism; N-acetylneuraminate degradation. Catalyzes the cleavage of N-acetylneuraminic acid (sialic acid) to form pyruvate and N-acetylmannosamine via a Schiff base intermediate. It prevents sialic acids from being recycled and returning to the cell surface. Involved in the N-glycolylneuraminic acid (Neu5Gc) degradation pathway. Although human is not able to catalyze formation of Neu5Gc due to the inactive CMAHP enzyme, Neu5Gc is present in food and must be degraded. This chain is N-acetylneuraminate lyase, found in Homo sapiens (Human).